The chain runs to 239 residues: 1-(5-phosphoribosyl)-5-[(5-phosphoribosylamino)methylideneamino] imidazole-4-carboxamide isomerase (239 aa).

Residue aspartate 12 is the Proton acceptor of the active site. Residue aspartate 133 is the Proton donor of the active site.

It belongs to the HisA/HisF family.

It is found in the cytoplasm. The catalysed reaction is 1-(5-phospho-beta-D-ribosyl)-5-[(5-phospho-beta-D-ribosylamino)methylideneamino]imidazole-4-carboxamide = 5-[(5-phospho-1-deoxy-D-ribulos-1-ylimino)methylamino]-1-(5-phospho-beta-D-ribosyl)imidazole-4-carboxamide. It functions in the pathway amino-acid biosynthesis; L-histidine biosynthesis; L-histidine from 5-phospho-alpha-D-ribose 1-diphosphate: step 4/9. The sequence is that of 1-(5-phosphoribosyl)-5-[(5-phosphoribosylamino)methylideneamino] imidazole-4-carboxamide isomerase from Sulfurihydrogenibium sp. (strain YO3AOP1).